Consider the following 103-residue polypeptide: Putative membrane protein insertion efficiency factor (103 aa).

It belongs to the UPF0161 family.

Its subcellular location is the cell inner membrane. Its function is as follows. Could be involved in insertion of integral membrane proteins into the membrane. The chain is Putative membrane protein insertion efficiency factor from Chlamydia abortus (strain DSM 27085 / S26/3) (Chlamydophila abortus).